We begin with the raw amino-acid sequence, 216 residues long: Probable disulfide bond formation protein D (216 aa).

A signal peptide spans 1 to 25 (MKSNKLMALGIVFSIAVLIVIGTIA). Cysteines 65 and 68 form a disulfide.

The protein belongs to the thioredoxin family. DsbA subfamily.

In terms of biological role, may be required for disulfide bond formation in some proteins. This is Probable disulfide bond formation protein D (bdbD) from Bacillus cereus (strain ATCC 14579 / DSM 31 / CCUG 7414 / JCM 2152 / NBRC 15305 / NCIMB 9373 / NCTC 2599 / NRRL B-3711).